Reading from the N-terminus, the 495-residue chain is Aspartyl/glutamyl-tRNA(Asn/Gln) amidotransferase subunit B (495 aa).

Belongs to the GatB/GatE family. GatB subfamily. In terms of assembly, heterotrimer of A, B and C subunits.

The enzyme catalyses L-glutamyl-tRNA(Gln) + L-glutamine + ATP + H2O = L-glutaminyl-tRNA(Gln) + L-glutamate + ADP + phosphate + H(+). It catalyses the reaction L-aspartyl-tRNA(Asn) + L-glutamine + ATP + H2O = L-asparaginyl-tRNA(Asn) + L-glutamate + ADP + phosphate + 2 H(+). Its function is as follows. Allows the formation of correctly charged Asn-tRNA(Asn) or Gln-tRNA(Gln) through the transamidation of misacylated Asp-tRNA(Asn) or Glu-tRNA(Gln) in organisms which lack either or both of asparaginyl-tRNA or glutaminyl-tRNA synthetases. The reaction takes place in the presence of glutamine and ATP through an activated phospho-Asp-tRNA(Asn) or phospho-Glu-tRNA(Gln). The chain is Aspartyl/glutamyl-tRNA(Asn/Gln) amidotransferase subunit B from Halobacterium salinarum (strain ATCC 700922 / JCM 11081 / NRC-1) (Halobacterium halobium).